Here is a 423-residue protein sequence, read N- to C-terminus: Probable sodium/metabolite cotransporter BASS4, chloroplastic (423 aa).

The transit peptide at 1–55 (MVTTHHLCLLRSTVLSVPVRLRAPRAPPHPRLPTASASASSYHGPTHLRRLRPLR) directs the protein to the chloroplast. Positions 23–45 (APRAPPHPRLPTASASASSYHGP) are disordered. 9 helical membrane-spanning segments follow: residues 96–116 (FLPL…TLGC), 123–140 (LSKY…LTLR), 153–173 (AGLF…QFIM), 182–202 (FITG…GVTL), 212–232 (LALA…PLSL), 244–264 (LPTE…IILG), 284–301 (GFSV…WIQV), 315–335 (AFAV…AFNA), and 389–409 (LLVI…SIIV).

The protein belongs to the bile acid:sodium symporter (BASS) (TC 2.A.28) family.

It is found in the membrane. The protein resides in the plastid. It localises to the chloroplast envelope. May function as sodium-coupled metabolite transporter across the chloroplast envelope. The chain is Probable sodium/metabolite cotransporter BASS4, chloroplastic (BASS4) from Oryza sativa subsp. indica (Rice).